Here is a 91-residue protein sequence, read N- to C-terminus: UPF0728 protein v1g117062 (91 aa).

It belongs to the UPF0728 family.

This chain is UPF0728 protein v1g117062, found in Nematostella vectensis (Starlet sea anemone).